Consider the following 715-residue polypeptide: DNA ligase (715 aa).

NAD(+) is bound by residues 47–51 (DADYD), 96–97 (SL), and Glu-129. Lys-131 (N6-AMP-lysine intermediate) is an active-site residue. NAD(+)-binding residues include Arg-152, Glu-189, Lys-306, and Lys-330. The Zn(2+) site is built by Cys-435, Cys-438, Cys-453, and Cys-459. Positions 637 to 715 (KRDSAVAGKT…EDEWLALIQG (79 aa)) constitute a BRCT domain.

The protein belongs to the NAD-dependent DNA ligase family. LigA subfamily. Requires Mg(2+) as cofactor. Mn(2+) is required as a cofactor.

The catalysed reaction is NAD(+) + (deoxyribonucleotide)n-3'-hydroxyl + 5'-phospho-(deoxyribonucleotide)m = (deoxyribonucleotide)n+m + AMP + beta-nicotinamide D-nucleotide.. Functionally, DNA ligase that catalyzes the formation of phosphodiester linkages between 5'-phosphoryl and 3'-hydroxyl groups in double-stranded DNA using NAD as a coenzyme and as the energy source for the reaction. It is essential for DNA replication and repair of damaged DNA. This Rhodopseudomonas palustris (strain BisA53) protein is DNA ligase.